The following is a 1186-amino-acid chain: MNFSKNQRAVIAHIPDHNLLVAASAGSGKTTVLIEHVYQQLLSGKSIDRFLISTFTDAAALEMKNRLEKRIRAGITEEEGQLKRHLQEQLLLLNSAAIGTLDSFSLRIIERYYSVIGLDPRYRMLADQTEKNLLVKDVLDDTFDEMYHDEKFLRLLNNFSSASHDQDLKNLVIKLNTMAETRANPDFWLDSIAENYRLSGGLTKGSFWKELLQPQIFNRASAALYQLLSAKKGVEDLEDYHSYIAYLADAVGLVRGFIEVCSQNNWQQMSDYFVNNSWPKSARKSGKNEQEADYFDNWIKPWIKEAKDSYRSIESDFLFLNESQWLDISEKSLGVVEELIRLTKVFRKKFALKKRELSLLDFSDGEQFAYQILQNQTVREEIQSLFDEVLVDEYQDINDLQENILTDVSNGSNFFMVGDLKQSIYGFRQADPVNFSNKYIQYKEGNGGELIELSENYRSQHNVADFTNAVFRKLMDRKLGGIDYRGDVELKAANRDYPKNLKNVADISIFDIDEESNEDEDFNSRQAQIEIIAAKIQALVGQSEIYDRQSGKMRPLVYRDITILERSHSWENDIQTIFKKYHIPINVAAGNFLQEFEVSIVLSFLKIIDNPHQDIPLVAVLRSPIYGLDENQLAEIRTADMKHDYFSALQAYAKTGQDLDLQKKMAAFLVQLENYREIAADNQIVDLIWQIYNDTNWPEYVAGMVGGSQRQANLHALYQYAQQLSDNHFVGLFSFIRYVEQLMDSVEDFAQAPVDMGQEAVSVMTIHAAKGLEFPIVFLLNLDKQIDNRDSNGAMVVDFDNGIGIDFVHPTSQVKIPTIQKIAVAEKIKEKNWAEEMRLLYVALTRAEQRLYLVGSSKRMSDLIHNWGTPVSIGKKVIAFQDRMRAKSYQSWIGMSLANSGYIKLDKVEGNYSKKDLTFKIESYNAQTIPKIVENKAKIKQNEQEETGIDLARSKKILDYNYPYKIESELAAYHNVSELKRVFEDPDSLLMPEMNSDRQPQITELPEPKFIGGNDQEQVSSTDKGTATHLILEKIDWKKEIDKDYLQQLIKENIPDQKTRQSIELDRIIWFANSEFGTEIKKSASTLKREQTFAMLIPAKQIYQQVETSDPVLVHGIIDGYFISDGLITLFDYKTDRFGKDYVSKLKERYSGQLNLYAAALSSIYPNLKVERKVVVGLQGKRLIYL.

The UvrD-like helicase ATP-binding domain maps to Asn-2–Gln-460. Ala-23–Thr-30 contributes to the ATP binding site. The UvrD-like helicase C-terminal domain maps to Asp-487–Gly-771.

Belongs to the helicase family. AddA subfamily. In terms of assembly, heterodimer of AddA and AddB/RexB. The cofactor is Mg(2+).

It carries out the reaction Couples ATP hydrolysis with the unwinding of duplex DNA by translocating in the 3'-5' direction.. The enzyme catalyses ATP + H2O = ADP + phosphate + H(+). Its function is as follows. The heterodimer acts as both an ATP-dependent DNA helicase and an ATP-dependent, dual-direction single-stranded exonuclease. Recognizes the chi site generating a DNA molecule suitable for the initiation of homologous recombination. The AddA nuclease domain is required for chi fragment generation; this subunit has the helicase and 3' -&gt; 5' nuclease activities. The sequence is that of ATP-dependent helicase/nuclease subunit A from Oenococcus oeni (strain ATCC BAA-331 / PSU-1).